A 264-amino-acid chain; its full sequence is Thymidylate synthase (264 aa).

DUMP is bound at residue arginine 21. (6R)-5,10-methylene-5,6,7,8-tetrahydrofolate is bound at residue histidine 51. 126-127 (RR) contacts dUMP. The active-site Nucleophile is the cysteine 146. Residues 166 to 169 (RSAD), asparagine 177, and 207 to 209 (HLY) contribute to the dUMP site. Aspartate 169 is a binding site for (6R)-5,10-methylene-5,6,7,8-tetrahydrofolate. Alanine 263 contacts (6R)-5,10-methylene-5,6,7,8-tetrahydrofolate.

Belongs to the thymidylate synthase family. Bacterial-type ThyA subfamily. Homodimer.

The protein resides in the cytoplasm. The enzyme catalyses dUMP + (6R)-5,10-methylene-5,6,7,8-tetrahydrofolate = 7,8-dihydrofolate + dTMP. Its pathway is pyrimidine metabolism; dTTP biosynthesis. Its function is as follows. Catalyzes the reductive methylation of 2'-deoxyuridine-5'-monophosphate (dUMP) to 2'-deoxythymidine-5'-monophosphate (dTMP) while utilizing 5,10-methylenetetrahydrofolate (mTHF) as the methyl donor and reductant in the reaction, yielding dihydrofolate (DHF) as a by-product. This enzymatic reaction provides an intracellular de novo source of dTMP, an essential precursor for DNA biosynthesis. In Hyphomonas neptunium (strain ATCC 15444), this protein is Thymidylate synthase.